A 154-amino-acid polypeptide reads, in one-letter code: Superoxide dismutase [Cu-Zn] (154 aa).

Residues His-47, His-49, and His-64 each coordinate Cu cation. A disulfide bridge connects residues Cys-58 and Cys-147. His-64, His-72, His-81, and Asp-84 together coordinate Zn(2+). His-121 is a binding site for Cu cation. The segment covering 125-136 (DDLGKGGNEESL) has biased composition (basic and acidic residues). The tract at residues 125-144 (DDLGKGGNEESLKTGNAGPR) is disordered. Arg-144 contributes to the substrate binding site.

Belongs to the Cu-Zn superoxide dismutase family. Homodimer. It depends on Cu cation as a cofactor. Zn(2+) serves as cofactor.

The protein resides in the cytoplasm. The enzyme catalyses 2 superoxide + 2 H(+) = H2O2 + O2. Destroys radicals which are normally produced within the cells and which are toxic to biological systems. The protein is Superoxide dismutase [Cu-Zn] (sod-1) of Neurospora crassa (strain ATCC 24698 / 74-OR23-1A / CBS 708.71 / DSM 1257 / FGSC 987).